A 476-amino-acid chain; its full sequence is Aspartyl/glutamyl-tRNA(Asn/Gln) amidotransferase subunit B (476 aa).

This sequence belongs to the GatB/GatE family. GatB subfamily. In terms of assembly, heterotrimer of A, B and C subunits.

It carries out the reaction L-glutamyl-tRNA(Gln) + L-glutamine + ATP + H2O = L-glutaminyl-tRNA(Gln) + L-glutamate + ADP + phosphate + H(+). It catalyses the reaction L-aspartyl-tRNA(Asn) + L-glutamine + ATP + H2O = L-asparaginyl-tRNA(Asn) + L-glutamate + ADP + phosphate + 2 H(+). Its function is as follows. Allows the formation of correctly charged Asn-tRNA(Asn) or Gln-tRNA(Gln) through the transamidation of misacylated Asp-tRNA(Asn) or Glu-tRNA(Gln) in organisms which lack either or both of asparaginyl-tRNA or glutaminyl-tRNA synthetases. The reaction takes place in the presence of glutamine and ATP through an activated phospho-Asp-tRNA(Asn) or phospho-Glu-tRNA(Gln). The protein is Aspartyl/glutamyl-tRNA(Asn/Gln) amidotransferase subunit B of Lactobacillus helveticus (strain DPC 4571).